The sequence spans 476 residues: Glycogen synthase (476 aa).

Lysine 15 is a binding site for ADP-alpha-D-glucose.

The protein belongs to the glycosyltransferase 1 family. Bacterial/plant glycogen synthase subfamily.

It catalyses the reaction [(1-&gt;4)-alpha-D-glucosyl](n) + ADP-alpha-D-glucose = [(1-&gt;4)-alpha-D-glucosyl](n+1) + ADP + H(+). The protein operates within glycan biosynthesis; glycogen biosynthesis. Its function is as follows. Synthesizes alpha-1,4-glucan chains using ADP-glucose. The chain is Glycogen synthase from Streptococcus gordonii (strain Challis / ATCC 35105 / BCRC 15272 / CH1 / DL1 / V288).